Reading from the N-terminus, the 196-residue chain is Urease accessory protein UreE (196 aa).

A disordered region spans residues 150-196 (RGAYSGGHDHGHAHAHSHAEAHSHAHGESHSHSHSHSHDDHHHHDHD). The span at 156 to 196 (GHDHGHAHAHSHAEAHSHAHGESHSHSHSHSHDDHHHHDHD) shows a compositional bias: basic and acidic residues.

Belongs to the UreE family.

It is found in the cytoplasm. Functionally, involved in urease metallocenter assembly. Binds nickel. Probably functions as a nickel donor during metallocenter assembly. This chain is Urease accessory protein UreE, found in Mesorhizobium japonicum (strain LMG 29417 / CECT 9101 / MAFF 303099) (Mesorhizobium loti (strain MAFF 303099)).